The following is a 299-amino-acid chain: Probable lipid kinase YegS (299 aa).

In terms of domain architecture, DAGKc spans 2–133 (ANFPDSLLIL…IDMARVNDKT (132 aa)). Residues Thr40, 66–72 (GDGTINE), and Thr95 contribute to the ATP site. Positions 215, 218, and 220 each coordinate Mg(2+). Glu271 serves as the catalytic Proton acceptor.

Belongs to the diacylglycerol/lipid kinase family. YegS lipid kinase subfamily. Requires Mg(2+) as cofactor. It depends on Ca(2+) as a cofactor.

It localises to the cytoplasm. In terms of biological role, probably phosphorylates lipids; the in vivo substrate is unknown. In Salmonella arizonae (strain ATCC BAA-731 / CDC346-86 / RSK2980), this protein is Probable lipid kinase YegS.